A 476-amino-acid polypeptide reads, in one-letter code: Aspartyl/glutamyl-tRNA(Asn/Gln) amidotransferase subunit B (476 aa).

The protein belongs to the GatB/GatE family. GatB subfamily. Heterotrimer of A, B and C subunits.

It catalyses the reaction L-glutamyl-tRNA(Gln) + L-glutamine + ATP + H2O = L-glutaminyl-tRNA(Gln) + L-glutamate + ADP + phosphate + H(+). The catalysed reaction is L-aspartyl-tRNA(Asn) + L-glutamine + ATP + H2O = L-asparaginyl-tRNA(Asn) + L-glutamate + ADP + phosphate + 2 H(+). Functionally, allows the formation of correctly charged Asn-tRNA(Asn) or Gln-tRNA(Gln) through the transamidation of misacylated Asp-tRNA(Asn) or Glu-tRNA(Gln) in organisms which lack either or both of asparaginyl-tRNA or glutaminyl-tRNA synthetases. The reaction takes place in the presence of glutamine and ATP through an activated phospho-Asp-tRNA(Asn) or phospho-Glu-tRNA(Gln). In Lactobacillus gasseri (strain ATCC 33323 / DSM 20243 / BCRC 14619 / CIP 102991 / JCM 1131 / KCTC 3163 / NCIMB 11718 / NCTC 13722 / AM63), this protein is Aspartyl/glutamyl-tRNA(Asn/Gln) amidotransferase subunit B.